Consider the following 188-residue polypeptide: Glutathione S-transferase 2 (188 aa).

The 78-residue stretch at 2–79 folds into the GST N-terminal domain; it reads VHYKLMCFDV…FLARQYGYSG (78 aa). Glutathione is bound by residues lysine 43, 49-51, and 63-64; these read GQL and QS. Residues 81–188 form the GST C-terminal domain; it reads TPTEEMQVDS…PHLNVFIRKL (108 aa).

The protein belongs to the GST superfamily. Sigma family.

The enzyme catalyses RX + glutathione = an S-substituted glutathione + a halide anion + H(+). Conjugation of reduced glutathione to a wide number of exogenous and endogenous hydrophobic electrophiles. This chain is Glutathione S-transferase 2 (gst-2), found in Caenorhabditis elegans.